Consider the following 428-residue polypeptide: Serine--tRNA ligase (428 aa).

An L-serine-binding site is contributed by 235–237 (TAE). 266–268 (RSE) serves as a coordination point for ATP. E289 is a binding site for L-serine. 353–356 (EISS) lines the ATP pocket. An L-serine-binding site is contributed by S389.

The protein belongs to the class-II aminoacyl-tRNA synthetase family. Type-1 seryl-tRNA synthetase subfamily. Homodimer. The tRNA molecule binds across the dimer.

It is found in the cytoplasm. The catalysed reaction is tRNA(Ser) + L-serine + ATP = L-seryl-tRNA(Ser) + AMP + diphosphate + H(+). The enzyme catalyses tRNA(Sec) + L-serine + ATP = L-seryl-tRNA(Sec) + AMP + diphosphate + H(+). The protein operates within aminoacyl-tRNA biosynthesis; selenocysteinyl-tRNA(Sec) biosynthesis; L-seryl-tRNA(Sec) from L-serine and tRNA(Sec): step 1/1. Catalyzes the attachment of serine to tRNA(Ser). Is also able to aminoacylate tRNA(Sec) with serine, to form the misacylated tRNA L-seryl-tRNA(Sec), which will be further converted into selenocysteinyl-tRNA(Sec). The chain is Serine--tRNA ligase from Shewanella oneidensis (strain ATCC 700550 / JCM 31522 / CIP 106686 / LMG 19005 / NCIMB 14063 / MR-1).